We begin with the raw amino-acid sequence, 293 residues long: Elongation factor Ts (293 aa).

Residues T79–V82 form an involved in Mg(2+) ion dislocation from EF-Tu region.

It belongs to the EF-Ts family.

It localises to the cytoplasm. Functionally, associates with the EF-Tu.GDP complex and induces the exchange of GDP to GTP. It remains bound to the aminoacyl-tRNA.EF-Tu.GTP complex up to the GTP hydrolysis stage on the ribosome. The chain is Elongation factor Ts from Bacillus pumilus (strain SAFR-032).